A 423-amino-acid chain; its full sequence is Carboxypeptidase B2 (423 aa).

Residues 1-22 (MKLYSLGVLVATVLFCGEHAFA) form the signal peptide. Positions 23 to 114 (FQRGQVLSAL…QTSNDTISPR (92 aa)) are cleaved as a propeptide — activation peptide. 4 N-linked (GlcNAc...) asparagine glycosylation sites follow: asparagine 44, asparagine 73, asparagine 85, and asparagine 108. Residues 122–419 (QYHSLNEIYS…VAVAKIASHV (298 aa)) form the Peptidase M14 domain. An intrachain disulfide couples cysteine 178 to cysteine 191. Zn(2+) contacts are provided by histidine 181 and glutamate 184. Substrate contacts are provided by residues 181-184 (HARE) and arginine 239. A glycan (N-linked (GlcNAc...) asparagine) is linked at asparagine 241. Intrachain disulfides connect cysteine 250/cysteine 274 and cysteine 265/cysteine 279. Position 256–257 (256–257 (NR)) interacts with substrate. Histidine 310 is a Zn(2+) binding site. Substrate-binding positions include 311–312 (SY) and tyrosine 363. The active-site Proton donor/acceptor is the glutamate 385.

It belongs to the peptidase M14 family. Zn(2+) serves as cofactor.

Its subcellular location is the secreted. It catalyses the reaction Release of C-terminal Arg and Lys from a polypeptide.. With respect to regulation, TAFI/CPB2 is unique among carboxypeptidases in that it spontaneously inactivates with a short half-life, a property that is crucial for its role in controlling blood clot lysis. The zymogen is stabilized by interactions with the activation peptide. Release of the activation peptide increases a dynamic flap mobility and in time this leads to conformational changes that disrupt the catalytic site and expose a cryptic thrombin-cleavage site present at Arg-324. Functionally, cleaves C-terminal arginine or lysine residues from biologically active peptides such as kinins or anaphylatoxins in the circulation thereby regulating their activities. Down-regulates fibrinolysis by removing C-terminal lysine residues from fibrin that has already been partially degraded by plasmin. The sequence is that of Carboxypeptidase B2 (CPB2) from Bos taurus (Bovine).